We begin with the raw amino-acid sequence, 307 residues long: Zinc-alpha-2-glycoprotein (307 aa).

Residues 1–17 form the signal peptide; the sequence is MVPVLLSLPLLLGPAVF. Gln-18 carries the post-translational modification Pyrrolidone carboxylic acid. A disulfide bridge connects residues Cys-118 and Cys-181. Asn-123, Asn-190, and Asn-254 each carry an N-linked (GlcNAc...) asparagine glycan. One can recognise an Ig-like C1-type domain in the interval 202-287; it reads PTVTITSRVI…DHRGFSQSLS (86 aa). Cysteines 220 and 275 form a disulfide.

The protein belongs to the MHC class I family. Interacts with PIP.

The protein resides in the secreted. Its function is as follows. Stimulates lipid degradation in adipocytes and causes the extensive fat losses associated with some advanced cancers. This Mus musculus (Mouse) protein is Zinc-alpha-2-glycoprotein (Azgp1).